Consider the following 396-residue polypeptide: Probable glucan endo-1,6-beta-glucosidase B (396 aa).

The signal sequence occupies residues 1–17 (MIRRLAAFSALSGLATA). The N-linked (GlcNAc...) asparagine glycan is linked to asparagine 30. Catalysis depends on glutamate 219, which acts as the Proton donor. The N-linked (GlcNAc...) asparagine glycan is linked to asparagine 272. The Nucleophile role is filled by glutamate 320.

This sequence belongs to the glycosyl hydrolase 5 (cellulase A) family.

The protein resides in the secreted. It catalyses the reaction Random hydrolysis of (1-&gt;6)-linkages in (1-&gt;6)-beta-D-glucans.. Beta-glucanases participate in the metabolism of beta-glucan, the main structural component of the cell wall. Acts on lutean, pustulan and 1,6-oligo-beta-D-glucosides. The polypeptide is Probable glucan endo-1,6-beta-glucosidase B (exgB) (Aspergillus fumigatus (strain CBS 144.89 / FGSC A1163 / CEA10) (Neosartorya fumigata)).